The following is a 497-amino-acid chain: Cysteine--tRNA ligase (497 aa).

Cysteine 46 contributes to the Zn(2+) binding site. The short motif at proline 48–histidine 58 is the 'HIGH' region element. Cysteine 237, histidine 262, and glutamate 266 together coordinate Zn(2+). The 'KMSKS' region signature appears at lysine 293–serine 297. Lysine 296 provides a ligand contact to ATP.

This sequence belongs to the class-I aminoacyl-tRNA synthetase family. In terms of assembly, monomer. It depends on Zn(2+) as a cofactor.

It localises to the cytoplasm. It catalyses the reaction tRNA(Cys) + L-cysteine + ATP = L-cysteinyl-tRNA(Cys) + AMP + diphosphate. In Deinococcus geothermalis (strain DSM 11300 / CIP 105573 / AG-3a), this protein is Cysteine--tRNA ligase.